The following is a 257-amino-acid chain: Neurotrophin-3 (257 aa).

The signal sequence occupies residues 1-18; it reads MSILFYVIFLAYLRGIQS. Residues 19–138 constitute a propeptide that is removed on maturation; sequence TNMDQRSLPE…VLNRTSRRKR (120 aa). An N-linked (GlcNAc...) asparagine glycan is attached at Asn131. Cystine bridges form between Cys152–Cys217, Cys195–Cys246, and Cys205–Cys248.

Belongs to the NGF-beta family. In the embryo, the expression peak at E4.5 and decreases at later stages of development.

The protein resides in the secreted. Its function is as follows. Seems to promote the survival of visceral and proprioceptive sensory neurons. The protein is Neurotrophin-3 (NTF3) of Gallus gallus (Chicken).